The sequence spans 450 residues: tRNA (guanine-N(7)-)-methyltransferase non-catalytic subunit TRM82 (450 aa).

Over residues 69–82 (AAKKLKTNEGEAIE) the composition is skewed to basic and acidic residues. Residues 69–103 (AAKKLKTNEGEAIERPGNQRRVPLPGKDPKVPVPG) form a disordered region. WD repeat units lie at residues 108–147 (PVYQYIRCLQLSHDEKMLVACTDSDKAAVFFRIELHKDNC), 200–241 (GHVS…VIDK), and 245–285 (GHKE…LMSS).

This sequence belongs to the WD repeat TRM82 family. Forms a heterodimer with the catalytic subunit TRM8.

The protein resides in the nucleus. The protein operates within tRNA modification; N(7)-methylguanine-tRNA biosynthesis. Its function is as follows. Required for the formation of N(7)-methylguanine at position 46 (m7G46) in tRNA. In the complex, it is required to stabilize and induce conformational changes of the catalytic subunit. The protein is tRNA (guanine-N(7)-)-methyltransferase non-catalytic subunit TRM82 of Eremothecium gossypii (strain ATCC 10895 / CBS 109.51 / FGSC 9923 / NRRL Y-1056) (Yeast).